The sequence spans 329 residues: DNA-directed RNA polymerase subunit alpha (329 aa).

The tract at residues 1-235 is alpha N-terminal domain (alpha-NTD); that stretch reads MVREKVKVST…DLFIPFLHTE (235 aa). The interval 269–329 is alpha C-terminal domain (alpha-CTD); that stretch reads IALKYIFIDQ…KQILGILEKK (61 aa).

This sequence belongs to the RNA polymerase alpha chain family. In terms of assembly, in plastids the minimal PEP RNA polymerase catalytic core is composed of four subunits: alpha, beta, beta', and beta''. When a (nuclear-encoded) sigma factor is associated with the core the holoenzyme is formed, which can initiate transcription.

It localises to the plastid. The protein resides in the chloroplast. It carries out the reaction RNA(n) + a ribonucleoside 5'-triphosphate = RNA(n+1) + diphosphate. DNA-dependent RNA polymerase catalyzes the transcription of DNA into RNA using the four ribonucleoside triphosphates as substrates. The chain is DNA-directed RNA polymerase subunit alpha from Gossypium hirsutum (Upland cotton).